Here is a 59-residue protein sequence, read N- to C-terminus: uncharacterized protein (59 aa).

This is an uncharacterized protein from Acidianus convivator (ATV).